A 523-amino-acid chain; its full sequence is Cytokinin dehydrogenase 3 (523 aa).

Residues 1–31 form the signal peptide; that stretch reads MASYNLRSQVRLIAITIVIIITLSTPITTNT. Positions 66-243 constitute an FAD-binding PCMH-type domain; sequence TKIFPSAVLI…TRARIKLEVA (178 aa). Residues Ala100, Gly102, and Gly104 each contribute to the FAD site. His105 bears the Pros-8alpha-FAD histidine mark. The FAD site is built by Ser106 and Gln110. A glycan (N-linked (GlcNAc...) asparagine) is linked at Asn153. FAD-binding residues include Asp167, Thr172, Ser178, Ile182, and Ile233. A glycan (N-linked (GlcNAc...) asparagine) is linked at Asn408. FAD-binding residues include Tyr476, Ser511, and Gln514.

This sequence belongs to the oxygen-dependent FAD-linked oxidoreductase family. Requires FAD as cofactor. In terms of tissue distribution, very weak expression in the young shoot tissues around two weeks after germination. Present in the center of the floral meristem and the boundary between long stamen primordia and gynoecial primordia.

The protein resides in the endoplasmic reticulum. It is found in the vacuole. The enzyme catalyses N(6)-dimethylallyladenine + A + H2O = 3-methyl-2-butenal + adenine + AH2. Its function is as follows. Catalyzes the oxidation of cytokinins, a family of N(6)-substituted adenine derivatives that are plant hormones, where the substituent is an isopentenyl group. Catalyzes in vitro the oxidation of various types of cytokinin nucleotides that are known as direct products of cytokinin biosynthesis. In association with CKX5 regulates the activity of the reproductive meristems, flower organ size and ovule formation. In Arabidopsis thaliana (Mouse-ear cress), this protein is Cytokinin dehydrogenase 3 (CKX3).